A 1248-amino-acid chain; its full sequence is Structural polyprotein (1248 aa).

Over residues 1 to 10 (MEFIPTQTFY) the composition is skewed to polar residues. The interval 1-104 (MEFIPTQTFY…KKKKPGRRER (104 aa)) is disordered. The host transcription inhibition stretch occupies residues 36–68 (RKAGQLAQLISAVNKLTMRAVPQQKPRKNRKNK). Residues 60 to 72 (KPRKNRKNKKQKQ) are compositionally biased toward basic residues. The Nuclear localization signal motif lies at 61 to 99 (PRKNRKNKKQKQKQQAPRNNMNQKKQPPKKKPAQKKKKP). Residues 73–85 (KQQAPRNNMNQKK) are compositionally biased toward low complexity. A binding to the viral RNA region spans residues 84–114 (KKQPPKKKPAQKKKKPGRRERMCMKIENDCI). The span at 86 to 101 (QPPKKKPAQKKKKPGR) shows a compositional bias: basic residues. A ribosome-binding region spans residues 99 to 113 (PGRRERMCMKIENDC). Residues Cys-113 and Cys-128 are joined by a disulfide bond. Positions 113-261 (CIFEVKHEGK…KITPEGAEEW (149 aa)) constitute a Peptidase S3 domain. The Charge relay system role is filled by His-139. A Nuclear export signal motif is present at residues 144–154 (IDNADLAKLAF). The interaction with spike glycoprotein E2 stretch occupies residues 155–160 (KRSSKY). Asp-161 functions as the Charge relay system in the catalytic mechanism. The interval 183 to 193 (PEGYYNWHHGA) is dimerization of the capsid protein. Ser-213 acts as the Charge relay system in catalysis. Positions 219-223 (DNKGR) are dimerization of the capsid protein. The interval 262–274 (SLAIPVMCLLANT) is functions as an uncleaved signal peptide for the precursor of protein E3/E2. Over 262-692 (SLAIPVMCLL…YYYELYPTMT (431 aa)) the chain is Extracellular. 9 cysteine pairs are disulfide-bonded: Cys-269–Cys-278, Cys-283–Cys-287, Cys-286–Cys-318, Cys-344–Cys-450, Cys-347–Cys-353, Cys-416–Cys-430, Cys-478–Cys-591, Cys-526–Cys-550, and Cys-528–Cys-545. Asn-273 is a glycosylation site (N-linked (GlcNAc...) asparagine; by host). Interaction with host Mxra8 receptor stretches follow at residues 351–354 (HSCH) and 387–389 (HDW). Interaction with host Mxra8 receptor regions lie at residues 509-512 (QSGN) and 541-547 (VINNCKV). 2 N-linked (GlcNAc...) asparagine; by host glycosylation sites follow: Asn-588 and Asn-670. Residues 693-713 (VVVVSVASFVLLSMVGVAVGM) form a helical membrane-spanning segment. The Cytoplasmic portion of the chain corresponds to 714–748 (CMCARRRCITPYELTPGATVPFLLSLICCIRTAKA). Residues 716–720 (CARRR) form an interaction with the capsid protein region. 3 S-palmitoyl cysteine; by host lipidation sites follow: Cys-721, Cys-741, and Cys-742. The interval 721 to 741 (CITPYELTPGATVPFLLSLIC) is transient transmembrane before p62-6K protein processing. A disulfide bridge links Cys-721 with Cys-742. Over 749–763 (ATYQEAAVYLWNEQQ) the chain is Extracellular. Residues 764 to 784 (PLFWLQAIIPLAALIVLCNCL) form a helical membrane-spanning segment. Topologically, residues 785 to 795 (RLLPCCCKTLT) are cytoplasmic. Residues 796-816 (FLAVMSVGAHTVSAYEHVTVI) traverse the membrane as a helical segment. The Extracellular segment spans residues 817–1224 (PNTVGVPYKT…AMSWVQKITG (408 aa)). 3 disulfide bridges follow: Cys-858–Cys-923, Cys-871–Cys-903, and Cys-877–Cys-887. The E1 fusion peptide loop stretch occupies residues 893-910 (VYPFMWGGAYCFCDTENT). Residues Asn-950 and Asn-1079 are each glycosylated (N-linked (GlcNAc...) asparagine; by host). Cystine bridges form between Cys-1068–Cys-1080, Cys-1110–Cys-1185, Cys-1115–Cys-1189, and Cys-1137–Cys-1179. A helical membrane pass occupies residues 1225–1245 (GVGLVVAVAALILIVVLCVSF). Cys-1242 carries the S-palmitoyl cysteine; by host lipid modification. The Cytoplasmic segment spans residues 1246–1248 (SRH).

As to quaternary structure, homodimer. Homomultimer. Interacts with host karyopherin KPNA4; this interaction allows the nuclear import of the viral capsid protein. Interacts with spike glycoprotein E2. Interacts with host IRAK1; the interaction leads to inhibition of IRAK1-dependent signaling. The precursor of protein E3/E2 and E1 form a heterodimer shortly after synthesis. In terms of assembly, interacts with spike glycoprotein E2. The precursor of protein E3/E2 and E1 form a heterodimer shortly after synthesis. Processing of the precursor of protein E3/E2 into E2 and E3 results in a heterodimer of the spike glycoproteins E2 and E1. Spike at virion surface are constituted of three E2-E1 heterodimers. After target cell attachment and endocytosis, E1 change conformation to form homotrimers. Interacts with 6K protein. Interacts with host MXRA8; this interaction mediates virus entry. The interaction involves 2 adjacent E2-E1 heterodimers. As to quaternary structure, interacts with spike glycoprotein E1. Processing of the precursor of protein E3/E2 into E2 and E3 results in a heterodimer of the spike glycoproteins E2 and E1. Spike at virion surface are constituted of a trimer of E2-E1 heterodimers. Interacts with 6K protein. Interacts with host MXRA8; this interaction mediates virus entry. The interaction involves 2 adjacent E2-E1 heterodimers. Oligomer. Interacts with spike glycoprotein E1. Interacts with spike glycoprotein E2. In terms of processing, structural polyprotein: Specific enzymatic cleavages in vivo yield mature proteins. Capsid protein is auto-cleaved during polyprotein translation, unmasking a signal peptide at the N-terminus of the precursor of E3/E2. The remaining polyprotein is then targeted to the host endoplasmic reticulum, where host signal peptidase cleaves it into pE2, 6K and E1 proteins. pE2 is further processed to mature E3 and E2 by host furin in trans-Golgi vesicle. Palmitoylated via thioester bonds. These palmitoylations may induce disruption of the C-terminus transmembrane. This would result in the reorientation of E2 C-terminus from lumenal to cytoplasmic side. Post-translationally, N-glycosylated. In terms of processing, palmitoylated via thioester bonds.

The protein localises to the virion. It is found in the host cytoplasm. Its subcellular location is the host cell membrane. The protein resides in the host nucleus. It localises to the virion membrane. The protein localises to the host Golgi apparatus. It is found in the host trans-Golgi network. Its subcellular location is the host endoplasmic reticulum. It carries out the reaction Autocatalytic release of the core protein from the N-terminus of the togavirus structural polyprotein by hydrolysis of a -Trp-|-Ser- bond.. Functionally, forms an icosahedral capsid with a T=4 symmetry composed of 240 copies of the capsid protein surrounded by a lipid membrane through which penetrate 80 spikes composed of trimers of E1-E2 heterodimers. The capsid protein binds to the viral RNA genome at a site adjacent to a ribosome binding site for viral genome translation following genome release. Possesses a protease activity that results in its autocatalytic cleavage from the nascent structural protein. Following its self-cleavage, the capsid protein transiently associates with ribosomes, and within several minutes the protein binds to viral RNA and rapidly assembles into icosahedric core particles. The resulting nucleocapsid eventually associates with the cytoplasmic domain of the spike glycoprotein E2 at the cell membrane, leading to budding and formation of mature virions. In case of infection, new virions attach to target cells and after clathrin-mediated endocytosis their membrane fuses with the host endosomal membrane. This leads to the release of the nucleocapsid into the cytoplasm, followed by an uncoating event necessary for the genomic RNA to become accessible. The uncoating might be triggered by the interaction of capsid proteins with ribosomes. Binding of ribosomes would release the genomic RNA since the same region is genomic RNA-binding and ribosome-binding. Specifically inhibits interleukin-1 receptor-associated kinase 1/IRAK1-dependent signaling during viral entry, representing a means by which the alphaviruses may evade innate immune detection and activation prior to viral gene expression. Degrades host cyclic GMP-AMP synthase (CGAS) thereby inhibiting the cGAS-STING pathway. Provides the signal sequence for the translocation of the precursor of protein E3/E2 to the host endoplasmic reticulum. Furin-cleaved E3 remains associated with spike glycoprotein E1 and mediates pH protection of the latter during the transport via the secretory pathway. After virion release from the host cell, the assembly protein E3 is gradually released in the extracellular space. Its function is as follows. Plays a role in viral attachment to target host cell, by binding to the cell receptor MXRA8. Synthesized as a p62 precursor which is processed by furin at the cell membrane just before virion budding, giving rise to E2-E1 heterodimer. The p62-E1 heterodimer is stable, whereas E2-E1 is unstable and dissociate at low pH. p62 is processed at the last step, presumably to avoid E1 fusion activation before its final export to cell surface. E2 C-terminus contains a transitory transmembrane that would be disrupted by palmitoylation, resulting in reorientation of the C-terminal tail from lumenal to cytoplasmic side. This step is critical since E2 C-terminus is involved in budding by interacting with capsid proteins. This release of E2 C-terminus in cytoplasm occurs lately in protein export, and precludes premature assembly of particles at the endoplasmic reticulum membrane. In terms of biological role, acts as a viroporin that participates in virus glycoprotein processing and transport to the plasma membrane, cell permeabilization and budding of viral particles. Disrupts the calcium homeostasis of the cell, probably at the endoplasmic reticulum level. This leads to cytoplasmic calcium elevation. Because of its lipophilic properties, the 6K protein is postulated to influence the selection of lipids that interact with the transmembrane domains of the glycoproteins, which, in turn, affects the deformability of the bilayer required for the extreme curvature that occurs as budding proceeds. Present in low amount in virions, about 3% compared to viral glycoproteins. Functionally, class II viral fusion protein. Fusion activity is inactive as long as E1 is bound to E2 in mature virion. After virus attachment to target cell via host MXRA8 and endocytosis, acidification of the endosome induce dissociation of E1/E2 heterodimer and concomitant trimerization of the E1 subunits. This E1 trimer is fusion active, and promotes release of viral nucleocapsid in cytoplasm after endosome and viral membrane fusion. Efficient fusion requires the presence of cholesterol and sphingolipid in the target membrane. This is Structural polyprotein from Chikungunya virus (strain Nagpur) (CHIKV).